A 169-amino-acid chain; its full sequence is MAPKKAKRRAAAEGSSNVFSMFDQTQIQEFKEAFTVIDQNRDGIIDKEDLRDTFAAMGRLNVKNEELDAMMKEASGPINFTVFLTMFGEKLKGADPEDVITGAFKVLDPEGKGTIKKQFLEELLTTQCDRFSQEEIKNMWAAFPPDVGGNVDYKNICYVITHGDAKDQE.

Ala-2 carries the post-translational modification N,N,N-trimethylalanine. Residues Ser-15 and Ser-16 each carry the phosphoserine modification. Residues Thr-25 and Thr-35 each carry the phosphothreonine modification. The region spanning 25-60 (TQIQEFKEAFTVIDQNRDGIIDKEDLRDTFAAMGRL) is the EF-hand 1 domain. The Ca(2+) site is built by Asp-38, Asn-40, Asp-42, and Asp-49. Residue Ser-75 is modified to Phosphoserine. 2 EF-hand domains span residues 95-130 (DPED…QCDR) and 131-166 (FSQE…GDAK). The residue at position 101 (Thr-101) is a Phosphothreonine.

Myosin is a hexamer of 2 heavy chains and 4 light chains.

In terms of biological role, myosin regulatory subunit that plays an essential to maintain muscle integrity during early development. Plays a role in muscle contraction. This chain is Myosin regulatory light chain 11 (Myl11), found in Rattus norvegicus (Rat).